The chain runs to 393 residues: 4-hydroxyphenylpyruvate dioxygenase (393 aa).

Residue threonine 2 is modified to N-acetylthreonine. VOC domains follow at residues 18–149 (HFHS…LVEK) and 180–338 (IIDH…IFTK). N6-succinyllysine is present on lysine 132. Histidine 183 is a Fe cation binding site. Phosphoserine occurs at positions 211, 226, and 250. Residues histidine 266 and glutamate 349 each contribute to the Fe cation site.

This sequence belongs to the 4HPPD family. Homodimer. It depends on Fe cation as a cofactor.

It localises to the cytoplasm. Its subcellular location is the endoplasmic reticulum membrane. The protein resides in the golgi apparatus membrane. The catalysed reaction is 3-(4-hydroxyphenyl)pyruvate + O2 = homogentisate + CO2. It functions in the pathway amino-acid degradation; L-phenylalanine degradation; acetoacetate and fumarate from L-phenylalanine: step 3/6. Its function is as follows. Catalyzes the conversion of 4-hydroxyphenylpyruvic acid to homogentisic acid, one of the steps in tyrosine catabolism. In Bos taurus (Bovine), this protein is 4-hydroxyphenylpyruvate dioxygenase (HPD).